The chain runs to 179 residues: Repressor of phase 1 flagellin gene (179 aa).

Transcriptional repressor of the FliC phase-1 flagellin. The sequence is that of Repressor of phase 1 flagellin gene (fljA) from Salmonella typhimurium (strain LT2 / SGSC1412 / ATCC 700720).